Here is a 288-residue protein sequence, read N- to C-terminus: NAD kinase (288 aa).

Asp-73 (proton acceptor) is an active-site residue. Residues Asp-73–Gly-74, Arg-78, Asn-144–Glu-145, Asp-174, Thr-185–Ser-190, and Ala-209 each bind NAD(+).

The protein belongs to the NAD kinase family. The cofactor is a divalent metal cation.

It localises to the cytoplasm. The catalysed reaction is NAD(+) + ATP = ADP + NADP(+) + H(+). Involved in the regulation of the intracellular balance of NAD and NADP, and is a key enzyme in the biosynthesis of NADP. Catalyzes specifically the phosphorylation on 2'-hydroxyl of the adenosine moiety of NAD to yield NADP. The sequence is that of NAD kinase from Porphyromonas gingivalis (strain ATCC BAA-308 / W83).